A 257-amino-acid polypeptide reads, in one-letter code: uncharacterized protein (257 aa).

S127 is subject to Phosphoserine. 2 disordered regions span residues 146-174 (HEDP…EDDG) and 210-231 (AREK…RREK). A compositionally biased stretch (polar residues) spans 151 to 160 (PSSTYNSSIS). Residues 196 to 257 (HVRMVREVHE…QQQQEDEQKT (62 aa)) adopt a coiled-coil conformation.

This is an uncharacterized protein from Arabidopsis thaliana (Mouse-ear cress).